The following is a 360-amino-acid chain: MNAPLGGIWLWLPLLLTWLSPEVSSSWWYMRATGGSSRVMCDNVPGLVSRQRQLCHRNPDVMRAIGLGVAEWTAECQHQFRQHRWNCNTLDRDHSLFGRVLLRSSRESAFVYAISSAGVVFAITRACSQGELKSCSCDPKKKGSSRDNKGTFDWGGCSDNIDYGIKFARAFVDAKERQGKDARALMNLHNNRAGRKAVKRFLKQECKCHGVSGSCTLRTCWLAMADFRKTGDYLWKKYSGAIQVVMNQDGTGFTVANKRFKKPTKNDLVYFENSPDYCIRDRDAGSLGTAGRVCNLTSRGMDSCEVMCCGRGYDTSRVTRMTKCECKFHWCCAVRCQDCLEALDVHTCKAPKSADWAAPT.

An N-terminal signal peptide occupies residues 1–25; the sequence is MNAPLGGIWLWLPLLLTWLSPEVSS. Cystine bridges form between Cys-76/Cys-87, Cys-127/Cys-135, Cys-137/Cys-157, Cys-206/Cys-220, Cys-208/Cys-215, Cys-278/Cys-309, Cys-294/Cys-304, Cys-308/Cys-348, Cys-324/Cys-339, Cys-326/Cys-336, and Cys-331/Cys-332. Residue Ser-212 is the site of O-palmitoleoyl serine; by PORCN attachment. N-linked (GlcNAc...) asparagine glycosylation is present at Asn-295.

This sequence belongs to the Wnt family. Post-translationally, palmitoleoylation is required for efficient binding to frizzled receptors. Depalmitoleoylation leads to Wnt signaling pathway inhibition.

Its subcellular location is the secreted. It is found in the extracellular space. It localises to the extracellular matrix. Ligand for members of the frizzled family of seven transmembrane receptors. Probable developmental protein. May be a signaling molecule which affects the development of discrete regions of tissues. Is likely to signal over only few cell diameters. The sequence is that of Protein Wnt-2 (WNT2) from Carollia perspicillata (Seba's short-tailed bat).